The following is a 280-amino-acid chain: Small ribosomal subunit protein uS3 (280 aa).

In terms of domain architecture, KH type-2 spans isoleucine 38–lysine 106. Residues alanine 216–serine 280 form a disordered region. Over residues serine 237–proline 270 the composition is skewed to low complexity.

It belongs to the universal ribosomal protein uS3 family. In terms of assembly, part of the 30S ribosomal subunit. Forms a tight complex with proteins S10 and S14.

Functionally, binds the lower part of the 30S subunit head. Binds mRNA in the 70S ribosome, positioning it for translation. This Mycolicibacterium vanbaalenii (strain DSM 7251 / JCM 13017 / BCRC 16820 / KCTC 9966 / NRRL B-24157 / PYR-1) (Mycobacterium vanbaalenii) protein is Small ribosomal subunit protein uS3.